Here is a 482-residue protein sequence, read N- to C-terminus: MKGLFIRIVLAICLSLWAIDMVFPWQQIVRSKQNYHTTIQERQKLIVGTINNPVSYFIGTNGETGLEYELSKAFANYLNVDLEMFPLNSADALFQALAQGKIDIAAASLFYQQDRSEKFKLGPAYHAASWQLTYRKGERRPITLENLSGKLVIPANSALNNILLAKKEKYPSLTWETSELSQEELLFQVAEGKIDYTIATSTEVSVNQQIKPQIAIAFNVTDEFTVHWYLSDKGSSELQAALLDFMNSAIENGLIARIEEKYFNHLNQFDYVDTRSYLNAIETVLPKYAPLFEKYKGDLDWRLLAAISYQESHWNPEATSPTGVRGMMMLTKATADRMNITNRLDPEQSIKAGSEYLHLLLKQMPDTILKEDRIWFALAAYNMGLGHLLDVRRLTKQLGGNPDNWLEVKKNLPLLAQKRYFTHLKYGYARGYEAFQYVENIRRYMNSIMNYYRLQQNQQDRQDRYENENNDVISTQTQQEQR.

Positions 1 to 18 (MKGLFIRIVLAICLSLWA) are cleaved as a signal peptide. Residues 19-266 (IDMVFPWQQI…RIEEKYFNHL (248 aa)) form a non-LT domain region. The tract at residues 267 to 482 (NQFDYVDTRS…ISTQTQQEQR (216 aa)) is LT domain. Glu311 is a catalytic residue.

This sequence in the N-terminal section; belongs to the bacterial solute-binding protein 3 family. The protein in the C-terminal section; belongs to the transglycosylase Slt family.

The protein resides in the cell outer membrane. It carries out the reaction Exolytic cleavage of the (1-&gt;4)-beta-glycosidic linkage between N-acetylmuramic acid (MurNAc) and N-acetylglucosamine (GlcNAc) residues in peptidoglycan, from either the reducing or the non-reducing ends of the peptidoglycan chains, with concomitant formation of a 1,6-anhydrobond in the MurNAc residue.. Its function is as follows. Murein-degrading enzyme that degrades murein glycan strands and insoluble, high-molecular weight murein sacculi, with the concomitant formation of a 1,6-anhydromuramoyl product. Lytic transglycosylases (LTs) play an integral role in the metabolism of the peptidoglycan (PG) sacculus. Their lytic action creates space within the PG sacculus to allow for its expansion as well as for the insertion of various structures such as secretion systems and flagella. The sequence is that of Membrane-bound lytic murein transglycosylase F from Histophilus somni (strain 129Pt) (Haemophilus somnus).